Here is a 183-residue protein sequence, read N- to C-terminus: NAD(P)H-quinone oxidoreductase subunit I, chloroplastic (183 aa).

4Fe-4S ferredoxin-type domains are found at residues 55–84 (GRIHFEFDKCIACEVCVRVCPINLPVVDWK) and 95–124 (KSYSIDFGVCIFCGNCVEYCPTNCLSMTEE). Residues Cys64, Cys67, Cys70, Cys74, Cys104, Cys107, Cys110, and Cys114 each coordinate [4Fe-4S] cluster.

This sequence belongs to the complex I 23 kDa subunit family. As to quaternary structure, NDH is composed of at least 16 different subunits, 5 of which are encoded in the nucleus. It depends on [4Fe-4S] cluster as a cofactor.

It is found in the plastid. It localises to the chloroplast thylakoid membrane. The enzyme catalyses a plastoquinone + NADH + (n+1) H(+)(in) = a plastoquinol + NAD(+) + n H(+)(out). It carries out the reaction a plastoquinone + NADPH + (n+1) H(+)(in) = a plastoquinol + NADP(+) + n H(+)(out). Its function is as follows. NDH shuttles electrons from NAD(P)H:plastoquinone, via FMN and iron-sulfur (Fe-S) centers, to quinones in the photosynthetic chain and possibly in a chloroplast respiratory chain. The immediate electron acceptor for the enzyme in this species is believed to be plastoquinone. Couples the redox reaction to proton translocation, and thus conserves the redox energy in a proton gradient. The polypeptide is NAD(P)H-quinone oxidoreductase subunit I, chloroplastic (Anthoceros angustus (Hornwort)).